A 92-amino-acid polypeptide reads, in one-letter code: Small ribosomal subunit protein bS20 (92 aa).

It belongs to the bacterial ribosomal protein bS20 family.

In terms of biological role, binds directly to 16S ribosomal RNA. The chain is Small ribosomal subunit protein bS20 from Thermosipho africanus (strain TCF52B).